Reading from the N-terminus, the 451-residue chain is Trigger factor (451 aa).

Residues 165–250 (DDKLTIDFEG…LHQIQAREAL (86 aa)) enclose the PPIase FKBP-type domain.

This sequence belongs to the FKBP-type PPIase family. Tig subfamily.

Its subcellular location is the cytoplasm. The enzyme catalyses [protein]-peptidylproline (omega=180) = [protein]-peptidylproline (omega=0). In terms of biological role, involved in protein export. Acts as a chaperone by maintaining the newly synthesized protein in an open conformation. Functions as a peptidyl-prolyl cis-trans isomerase. This chain is Trigger factor, found in Helicobacter pylori (strain G27).